The primary structure comprises 495 residues: UDP-N-acetylmuramoyl-L-alanyl-D-glutamate--2,6-diaminopimelate ligase (495 aa).

UDP-N-acetyl-alpha-D-muramoyl-L-alanyl-D-glutamate contacts are provided by residues Leu27, Ser29, and 44–46 (HQA). An ATP-binding site is contributed by 116–122 (GTNGKTT). Residues Asn157, 158-159 (TT), Ser185, Gln191, and Arg193 contribute to the UDP-N-acetyl-alpha-D-muramoyl-L-alanyl-D-glutamate site. Lys225 is subject to N6-carboxylysine. Meso-2,6-diaminopimelate-binding positions include Arg390, 414 to 417 (DNPR), Gly465, and Glu469. Residues 414–417 (DNPR) carry the Meso-diaminopimelate recognition motif motif.

It belongs to the MurCDEF family. MurE subfamily. Mg(2+) is required as a cofactor. Carboxylation is probably crucial for Mg(2+) binding and, consequently, for the gamma-phosphate positioning of ATP.

It is found in the cytoplasm. It carries out the reaction UDP-N-acetyl-alpha-D-muramoyl-L-alanyl-D-glutamate + meso-2,6-diaminopimelate + ATP = UDP-N-acetyl-alpha-D-muramoyl-L-alanyl-gamma-D-glutamyl-meso-2,6-diaminopimelate + ADP + phosphate + H(+). Its pathway is cell wall biogenesis; peptidoglycan biosynthesis. Functionally, catalyzes the addition of meso-diaminopimelic acid to the nucleotide precursor UDP-N-acetylmuramoyl-L-alanyl-D-glutamate (UMAG) in the biosynthesis of bacterial cell-wall peptidoglycan. The protein is UDP-N-acetylmuramoyl-L-alanyl-D-glutamate--2,6-diaminopimelate ligase of Shigella flexneri.